A 107-amino-acid chain; its full sequence is UPF0145 protein Ent638_1382 (107 aa).

The protein belongs to the UPF0145 family.

This Enterobacter sp. (strain 638) protein is UPF0145 protein Ent638_1382.